The chain runs to 399 residues: MSTPVTRTQVPDGVRDRLPSEAAAMRRLSARLDNVFRAWGYREVSTPVIEYLEAVAAGAANWGRREDLYQFFDRKGRTLALRPDMTTPIARLMATRLADEPLPLRLSYFAPVFRHRELRAGATSEIWQAGVELVGAPGEAADAEVISLACAAVRAADLTGFRIGLGHVGVVEGLFESAGVDPQAAAVLKEAMVARDLVAFEQGVARAGLSGERAERLLALVHFHGSYAEAVARFGGVGGRVAEALQHLGRVLEVLEALGVAEQVNLDLGLVRSLGYYTGVVFEGYLPGIGAPVLGGGRYDNLVAEFGRPLAATGFALEVDRLLMAQEQQGALAAEPGLDAVIACPPGQEAAAMAWAARLRAQGLAVEVDFLDRTGEELAAYARARAAARVLRPGVPSIH.

It belongs to the class-II aminoacyl-tRNA synthetase family. HisZ subfamily. In terms of assembly, heteromultimer composed of HisG and HisZ subunits.

The protein resides in the cytoplasm. It participates in amino-acid biosynthesis; L-histidine biosynthesis; L-histidine from 5-phospho-alpha-D-ribose 1-diphosphate: step 1/9. In terms of biological role, required for the first step of histidine biosynthesis. May allow the feedback regulation of ATP phosphoribosyltransferase activity by histidine. This is ATP phosphoribosyltransferase regulatory subunit from Symbiobacterium thermophilum (strain DSM 24528 / JCM 14929 / IAM 14863 / T).